The chain runs to 148 residues: D-aminoacyl-tRNA deacylase (148 aa).

The short motif at 137–138 (GP) is the Gly-cisPro motif, important for rejection of L-amino acids element.

It belongs to the DTD family. In terms of assembly, homodimer.

It is found in the cytoplasm. The enzyme catalyses glycyl-tRNA(Ala) + H2O = tRNA(Ala) + glycine + H(+). It carries out the reaction a D-aminoacyl-tRNA + H2O = a tRNA + a D-alpha-amino acid + H(+). Functionally, an aminoacyl-tRNA editing enzyme that deacylates mischarged D-aminoacyl-tRNAs. Also deacylates mischarged glycyl-tRNA(Ala), protecting cells against glycine mischarging by AlaRS. Acts via tRNA-based rather than protein-based catalysis; rejects L-amino acids rather than detecting D-amino acids in the active site. By recycling D-aminoacyl-tRNA to D-amino acids and free tRNA molecules, this enzyme counteracts the toxicity associated with the formation of D-aminoacyl-tRNA entities in vivo and helps enforce protein L-homochirality. This Deinococcus geothermalis (strain DSM 11300 / CIP 105573 / AG-3a) protein is D-aminoacyl-tRNA deacylase.